The chain runs to 209 residues: Transcription factor 23 (209 aa).

Disordered stretches follow at residues 1–20 (MSQE…GHNK) and 54–85 (LSRA…ARER). Basic and acidic residues predominate over residues 72 to 85 (GRSEASPENAARER). One can recognise a bHLH domain in the interval 75 to 127 (EASPENAARERTRVKTLRQAFLALQAALPAVPPDTKLSKLDVLVLATSYIAHL).

In terms of assembly, forms inactive heterodimeric complex with TCF3. Highly expressed in the uterus (predominantly in myometrium), ovary, and testis. Expression in the uterus is higher in the diestrus phase than in the estrus phase and reaches a maximum at 7.5 dpc. Expression declines towards the time of delivery and returns to the non-pregnant level 4 days after delivery. Low expression seen in lung, heart, intestine, and spleen.

The protein resides in the nucleus. Functionally, inhibits E-box-mediated binding and transactivation of bHLH factors. Inhibitory effect is similar to that of ID proteins. Inhibits the formation of TCF3 and MYOD1 homodimers and heterodimers. Lacks DNA binding activity. May be involved in the regulation or modulation of smooth muscle contraction of the uterus during pregnancy and particularly around the time of delivery. Seems to play a role in the inhibition of myogenesis. The chain is Transcription factor 23 (Tcf23) from Mus musculus (Mouse).